A 276-amino-acid polypeptide reads, in one-letter code: Probable ABC transporter permease protein PH1036 (276 aa).

6 helical membrane-spanning segments follow: residues 12–32 (IAWSIGIAWLIPFMGVLMASV), 75–95 (IVAIPSTIVPVIVASLAAYAF), 109–129 (FIVLLMALPQQMTVVPLYFLL), 137–157 (TFRGLIIVHSAWGLAWIIFFM), 186–206 (IVLPMALPGLISASILQFTWV), and 241–261 (GLLTAASIMVMLVPLLVYALF). The ABC transmembrane type-1 domain maps to 70–261 (LKNSLIVAIP…LVPLLVYALF (192 aa)).

The protein belongs to the binding-protein-dependent transport system permease family. MalFG subfamily.

It localises to the cell membrane. Probably part of a binding-protein-dependent transport system PH1036/38/39. Probably responsible for the translocation of the substrate across the membrane. This Pyrococcus horikoshii (strain ATCC 700860 / DSM 12428 / JCM 9974 / NBRC 100139 / OT-3) protein is Probable ABC transporter permease protein PH1036.